A 373-amino-acid polypeptide reads, in one-letter code: Putative C-P lyase subunit protein HtxH (373 aa).

Belongs to the PhnI family.

Functionally, belongs to an operon involved in hypophosphite oxidation. Exact function not known. In Stutzerimonas stutzeri (Pseudomonas stutzeri), this protein is Putative C-P lyase subunit protein HtxH (htxH).